Reading from the N-terminus, the 88-residue chain is Phosphocarrier protein HPr (88 aa).

In terms of domain architecture, HPr spans 1–88 (MASKEFHIVA…ETMTKEGLAE (88 aa)). The active-site Pros-phosphohistidine intermediate is His-15. Ser-46 bears the Phosphoserine; by HPrK/P mark.

The protein belongs to the HPr family.

It is found in the cytoplasm. Phosphorylation on Ser-46 inhibits the phosphoryl transfer from enzyme I to HPr. Functionally, general (non sugar-specific) component of the phosphoenolpyruvate-dependent sugar phosphotransferase system (sugar PTS). This major carbohydrate active-transport system catalyzes the phosphorylation of incoming sugar substrates concomitantly with their translocation across the cell membrane. The phosphoryl group from phosphoenolpyruvate (PEP) is transferred to the phosphoryl carrier protein HPr by enzyme I. Phospho-HPr then transfers it to the PTS EIIA domain. P-Ser-HPr interacts with the catabolite control protein A (CcpA), forming a complex that binds to DNA at the catabolite response elements cre, operator sites preceding a large number of catabolite-regulated genes. Thus, P-Ser-HPr is a corepressor in carbon catabolite repression (CCR), a mechanism that allows bacteria to coordinate and optimize the utilization of available carbon sources. P-Ser-HPr also plays a role in inducer exclusion, in which it probably interacts with several non-PTS permeases and inhibits their transport activity. This Lactococcus lactis subsp. cremoris (Streptococcus cremoris) protein is Phosphocarrier protein HPr (ptsH).